Reading from the N-terminus, the 993-residue chain is UPF0182 protein Sare_4110 (993 aa).

Helical transmembrane passes span 18–38 (IGVL…VQAW), 61–81 (LLLF…NLWL), 110–130 (LGTW…LSAQ), 171–191 (GVAF…HYVF), 209–229 (AHLS…YVLD), 260–280 (ILAY…NAWM), and 283–303 (LVWP…IGGI). Disordered stretches follow at residues 892 to 937 (QGEK…ADAA) and 974 to 993 (EQAA…SPGG). A compositionally biased stretch (pro residues) spans 900-929 (STPPPSGETPAPTPTPTPTPSSPSVTPPPV). A compositionally biased stretch (low complexity) spans 976-993 (AAGPGSAATPTGSPSPGG).

This sequence belongs to the UPF0182 family.

The protein localises to the cell membrane. The sequence is that of UPF0182 protein Sare_4110 from Salinispora arenicola (strain CNS-205).